Consider the following 258-residue polypeptide: 5'-nucleotidase SurE (258 aa).

Positions 16, 17, 47, and 99 each coordinate a divalent metal cation.

This sequence belongs to the SurE nucleotidase family. A divalent metal cation is required as a cofactor.

It localises to the cytoplasm. It carries out the reaction a ribonucleoside 5'-phosphate + H2O = a ribonucleoside + phosphate. Nucleotidase that shows phosphatase activity on nucleoside 5'-monophosphates. The protein is 5'-nucleotidase SurE of Coxiella burnetii (strain Dugway 5J108-111).